The sequence spans 374 residues: Glutamate 5-kinase (374 aa).

K16 contacts ATP. Residues S56, D143, and N155 each coordinate substrate. 175–176 (TD) contributes to the ATP binding site. Residues 282–360 (RGRVVLDAGA…SEIEAVLGYV (79 aa)) form the PUA domain.

It belongs to the glutamate 5-kinase family.

The protein resides in the cytoplasm. The enzyme catalyses L-glutamate + ATP = L-glutamyl 5-phosphate + ADP. It participates in amino-acid biosynthesis; L-proline biosynthesis; L-glutamate 5-semialdehyde from L-glutamate: step 1/2. Functionally, catalyzes the transfer of a phosphate group to glutamate to form L-glutamate 5-phosphate. In Ralstonia nicotianae (strain ATCC BAA-1114 / GMI1000) (Ralstonia solanacearum), this protein is Glutamate 5-kinase.